A 518-amino-acid polypeptide reads, in one-letter code: Chromosomal replication initiator protein DnaA (518 aa).

A domain I, interacts with DnaA modulators region spans residues 1–72; sequence MTLAEFWPLC…VREELAAGRS (72 aa). Residues 72–180 form a domain II region; it reads SAFVFKPGEG…DAEEARYEQT (109 aa). The interval 145–178 is disordered; sequence EPRQAAGSASRPESAAVAKARTDAQRDAEEARYE. Residues 164 to 177 are compositionally biased toward basic and acidic residues; that stretch reads ARTDAQRDAEEARY. Residues 181–397 form a domain III, AAA+ region region; it reads NLSPDYTFDT…GAFNRVGASS (217 aa). 4 residues coordinate ATP: Gly-225, Gly-227, Lys-228, and Thr-229. The segment at 398 to 518 is domain IV, binds dsDNA; it reads RFMNRPVIDI…YEKLLILIQN (121 aa).

The protein belongs to the DnaA family. Oligomerizes as a right-handed, spiral filament on DNA at oriC.

The protein resides in the cytoplasm. In terms of biological role, plays an essential role in the initiation and regulation of chromosomal replication. ATP-DnaA binds to the origin of replication (oriC) to initiate formation of the DNA replication initiation complex once per cell cycle. Binds the DnaA box (a 9 base pair repeat at the origin) and separates the double-stranded (ds)DNA. Forms a right-handed helical filament on oriC DNA; dsDNA binds to the exterior of the filament while single-stranded (ss)DNA is stabiized in the filament's interior. The ATP-DnaA-oriC complex binds and stabilizes one strand of the AT-rich DNA unwinding element (DUE), permitting loading of DNA polymerase. After initiation quickly degrades to an ADP-DnaA complex that is not apt for DNA replication. Binds acidic phospholipids. The polypeptide is Chromosomal replication initiator protein DnaA (Neisseria meningitidis serogroup A / serotype 4A (strain DSM 15465 / Z2491)).